The following is a 344-amino-acid chain: Ferrochelatase (344 aa).

Residues His-214 and Glu-295 each contribute to the Fe cation site.

This sequence belongs to the ferrochelatase family.

The protein localises to the cytoplasm. The catalysed reaction is heme b + 2 H(+) = protoporphyrin IX + Fe(2+). Its pathway is porphyrin-containing compound metabolism; protoheme biosynthesis; protoheme from protoporphyrin-IX: step 1/1. In terms of biological role, catalyzes the ferrous insertion into protoporphyrin IX. This Rhizobium etli (strain ATCC 51251 / DSM 11541 / JCM 21823 / NBRC 15573 / CFN 42) protein is Ferrochelatase.